The sequence spans 228 residues: Sugar fermentation stimulation protein homolog (228 aa).

The protein belongs to the SfsA family.

This Psychromonas ingrahamii (strain DSM 17664 / CCUG 51855 / 37) protein is Sugar fermentation stimulation protein homolog.